The chain runs to 59 residues: Large ribosomal subunit protein bL32 (59 aa).

This sequence belongs to the bacterial ribosomal protein bL32 family. Part of the 50S ribosomal subunit.

The protein is Large ribosomal subunit protein bL32 (rpmF) of Bacillus subtilis (strain 168).